Consider the following 347-residue polypeptide: NADH-ubiquinone oxidoreductase chain 2 (347 aa).

Transmembrane regions (helical) follow at residues 1–21 (MNPL…LITA), 25–45 (HWFL…PVLT), 55–75 (AAIK…MAIL), 96–116 (LMIL…FWVP), 123–143 (TLTS…SIMY), 145–165 (IFPV…IMVG), 178–198 (ILAY…PYNP), 199–219 (NITI…FLAL), 237–257 (LTWL…LPPL), 274–294 (GTLI…YFYM), and 324–344 (LLLP…PLTF).

This sequence belongs to the complex I subunit 2 family. In terms of assembly, core subunit of respiratory chain NADH dehydrogenase (Complex I) which is composed of 45 different subunits. Interacts with TMEM242.

It localises to the mitochondrion inner membrane. The enzyme catalyses a ubiquinone + NADH + 5 H(+)(in) = a ubiquinol + NAD(+) + 4 H(+)(out). Functionally, core subunit of the mitochondrial membrane respiratory chain NADH dehydrogenase (Complex I) which catalyzes electron transfer from NADH through the respiratory chain, using ubiquinone as an electron acceptor. Essential for the catalytic activity and assembly of complex I. The protein is NADH-ubiquinone oxidoreductase chain 2 of Symphalangus syndactylus (Siamang).